The sequence spans 229 residues: C-&gt;U-editing enzyme APOBEC-1 (229 aa).

Residues Val10–Leu134 enclose the CMP/dCMP-type deaminase domain. Residue His61 participates in Zn(2+) binding. Glu63 (proton donor) is an active-site residue. Positions 93 and 96 each coordinate Zn(2+).

Belongs to the cytidine and deoxycytidylate deaminase family. Homodimer. Interacts with A1CF; form an mRNA editing complex. Interacts with RBM47; form an mRNA editing complex. Found in a complex with CELF2/CUGBP2 and A1CF. Interacts with HNRPAB. Interacts with SYNCRIP. Zn(2+) serves as cofactor. Expressed in the liver as well as small intestine.

It is found in the cytoplasm. It localises to the nucleus. It catalyses the reaction a cytidine in mRNA + H2O + H(+) = a uridine in mRNA + NH4(+). It carries out the reaction cytidine(6666) in apoB mRNA + H2O + H(+) = uridine(6666) in apoB mRNA + NH4(+). Its function is as follows. Cytidine deaminase catalyzing the cytidine to uridine postranscriptional editing of a variety of mRNAs. Form complexes with cofactors that confer differential editing activity and selectivity. Responsible for the postranscriptional editing of a CAA codon for Gln to a UAA codon for stop in the apolipoprotein B mRNA. Also involved in CGA (Arg) to UGA (Stop) editing in the NF1 mRNA. May also play a role in the epigenetic regulation of gene expression by participating in DNA demethylation. This Rattus norvegicus (Rat) protein is C-&gt;U-editing enzyme APOBEC-1.